Consider the following 448-residue polypeptide: Antizyme inhibitor 1 (448 aa).

This sequence belongs to the Orn/Lys/Arg decarboxylase class-II family. ODC antizyme inhibitor subfamily. Monomer. Interacts with OAZ1 and OAZ3; this interaction disrupts the interaction between the antizyme and ODC1. Ubiquitinated, leading to its proteasomal degradation; a process that is reduced in presence of antizyme OAZ1. Expressed in various tissues including liver, heart and kidney.

The protein localises to the nucleus. In terms of biological role, antizyme inhibitor (AZI) protein that positively regulates ornithine decarboxylase (ODC) activity and polyamine uptake. AZI is an enzymatically inactive ODC homolog that counteracts the negative effect of ODC antizymes (AZs) OAZ1, OAZ2 and OAZ3 on ODC activity by competing with ODC for antizyme-binding. Inhibits antizyme-dependent ODC degradation and releases ODC monomers from their inactive complex with antizymes, leading to formation of the catalytically active ODC homodimer and restoring polyamine production. The protein is Antizyme inhibitor 1 (Azin1) of Rattus norvegicus (Rat).